Here is a 54-residue protein sequence, read N- to C-terminus: Sec-independent protein translocase protein TatA (54 aa).

A helical membrane pass occupies residues 1–21 (MGMSFSHLLIVLLIIFVLFGA).

The protein belongs to the TatA/E family. In terms of assembly, the Tat system comprises two distinct complexes: a TatABC complex, containing multiple copies of TatA, TatB and TatC subunits, and a separate TatA complex, containing only TatA subunits. Substrates initially bind to the TatABC complex, which probably triggers association of the separate TatA complex to form the active translocon.

The protein localises to the cell inner membrane. In terms of biological role, part of the twin-arginine translocation (Tat) system that transports large folded proteins containing a characteristic twin-arginine motif in their signal peptide across membranes. TatA could form the protein-conducting channel of the Tat system. The sequence is that of Sec-independent protein translocase protein TatA from Rickettsia prowazekii (strain Madrid E).